The primary structure comprises 645 residues: Putative bifunctional exonuclease/endonuclease protein MT2247 (645 aa).

An Exonuclease domain is found at 44–207 (VVVDLETTGG…DDARATVDVL (164 aa)). The GIY-YIG domain maps to 248–326 (HRPGVYLFRG…LSTHAPPYNR (79 aa)). The interval 603-645 (WQSDLPTEPHPSREQLFGRTGVDCRTGPPQPLLPGRQPFSTAG) is disordered. Low complexity predominate over residues 635–645 (LPGRQPFSTAG).

This is Putative bifunctional exonuclease/endonuclease protein MT2247 from Mycobacterium tuberculosis (strain CDC 1551 / Oshkosh).